The chain runs to 745 residues: Junction plakoglobin (745 aa).

Methionine 1 bears the N-acetylmethionine mark. Threonine 14 carries O-linked (GlcNAc) threonine glycosylation. Serine 99 and serine 125 each carry phosphoserine. ARM repeat units lie at residues 132-171 (NYQD…QLSK), 172-215 (KEAS…LSHH), 216-255 (REGL…NLLL), 258-297 (EGAK…LLAY), 298-341 (GNQE…LSVC), 342-381 (PSNK…NLSD), 383-420 (ATKQ…NLTC), 423-464 (SKNK…HLTS), 470-510 (EMAQ…NLAL), 512-551 (PANH…QPYT), 574-613 (PMNR…ELAQ), and 615-661 (KEAA…PDYR). The segment at 132–297 (NYQDDAELAT…TTDCLQLLAY (166 aa)) is interaction with DSC1 and DSG1. Serine 182 is modified (phosphoserine). The segment at 574 to 661 (PMNRMEIFRL…ISEDKNPDYR (88 aa)) is interaction with DSC1. A phosphoserine mark is found at serine 665 and serine 730.

Belongs to the beta-catenin family. In terms of assembly, homodimer. Component of an E-cadherin/catenin adhesion complex composed of at least E-cadherin/CDH1 and gamma-catenin/JUP, and possibly alpha-catenin/CTNNA1; the complex is located to adherens junctions. The stable association of CTNNA1 is controversial as CTNNA1 was shown not to bind to F-actin when assembled in the complex. Interacts with MUC1. Interacts with CAV1. Interacts with PTPRJ. Interacts with DSG1. Interacts with DSC1 and DSC2. Interacts with PKP2. Interacts with PKP3 (via N-terminus); the interaction is required for PKP3 localization to desmosome cell-cell junctions. Interacts with DSG4. In terms of processing, may be phosphorylated by FER. Expressed in the heart (at protein level).

The protein localises to the cell junction. It localises to the adherens junction. It is found in the desmosome. Its subcellular location is the cytoplasm. The protein resides in the cytoskeleton. The protein localises to the cell membrane. It localises to the nucleus. Its function is as follows. Common junctional plaque protein. The membrane-associated plaques are architectural elements in an important strategic position to influence the arrangement and function of both the cytoskeleton and the cells within the tissue. The presence of plakoglobin in both the desmosomes and in the intermediate junctions suggests that it plays a central role in the structure and function of submembranous plaques. Acts as a substrate for VE-PTP and is required by it to stimulate VE-cadherin function in endothelial cells. Can replace beta-catenin in E-cadherin/catenin adhesion complexes which are proposed to couple cadherins to the actin cytoskeleton. This Rattus norvegicus (Rat) protein is Junction plakoglobin.